Here is a 171-residue protein sequence, read N- to C-terminus: Translation initiation factor IF-3 (171 aa).

Belongs to the IF-3 family. As to quaternary structure, monomer.

Its subcellular location is the cytoplasm. In terms of biological role, IF-3 binds to the 30S ribosomal subunit and shifts the equilibrium between 70S ribosomes and their 50S and 30S subunits in favor of the free subunits, thus enhancing the availability of 30S subunits on which protein synthesis initiation begins. This Halalkalibacterium halodurans (strain ATCC BAA-125 / DSM 18197 / FERM 7344 / JCM 9153 / C-125) (Bacillus halodurans) protein is Translation initiation factor IF-3.